The primary structure comprises 418 residues: D-amino acid dehydrogenase (418 aa).

An FAD-binding site is contributed by 3–17 (VLVLGAGVAGVSSAW).

This sequence belongs to the DadA oxidoreductase family. FAD is required as a cofactor.

The enzyme catalyses a D-alpha-amino acid + A + H2O = a 2-oxocarboxylate + AH2 + NH4(+). It functions in the pathway amino-acid degradation; D-alanine degradation; NH(3) and pyruvate from D-alanine: step 1/1. Oxidative deamination of D-amino acids. In Neisseria meningitidis serogroup C / serotype 2a (strain ATCC 700532 / DSM 15464 / FAM18), this protein is D-amino acid dehydrogenase.